Consider the following 514-residue polypeptide: Photosystem II CP47 reaction center protein (514 aa).

6 consecutive transmembrane segments (helical) span residues 21-36, 109-123, 148-164, 211-226, 245-260, and 465-480; these read AVHL…WAGS, IVLS…VWHW, GGHL…FGTF, IAAG…FHLT, ALAS…AFVV, and CFAL…HGAR.

This sequence belongs to the PsbB/PsbC family. PsbB subfamily. In terms of assembly, PSII is composed of 1 copy each of membrane proteins PsbA, PsbB, PsbC, PsbD, PsbE, PsbF, PsbH, PsbI, PsbJ, PsbK, PsbL, PsbM, PsbT, PsbX, PsbY, PsbZ, Psb30/Ycf12, peripheral proteins PsbO, CyanoQ (PsbQ), PsbU, PsbV and a large number of cofactors. It forms dimeric complexes. The cofactor is Binds multiple chlorophylls. PSII binds additional chlorophylls, carotenoids and specific lipids..

It localises to the cellular thylakoid membrane. Its function is as follows. One of the components of the core complex of photosystem II (PSII). It binds chlorophyll and helps catalyze the primary light-induced photochemical processes of PSII. PSII is a light-driven water:plastoquinone oxidoreductase, using light energy to abstract electrons from H(2)O, generating O(2) and a proton gradient subsequently used for ATP formation. The polypeptide is Photosystem II CP47 reaction center protein (Prochlorothrix hollandica).